Consider the following 98-residue polypeptide: MALTKAEMAEHLFETLGINKRVAKEMVEAFFEEIRQALENGEQVKLSGFGNFDLRDKNQRPGRNPKTGEDIPISARRVVTFRPGQKLKSRVEEANAGK.

The disordered stretch occupies residues 49 to 72 (FGNFDLRDKNQRPGRNPKTGEDIP).

Belongs to the bacterial histone-like protein family. In terms of assembly, heterodimer of an alpha and a beta chain.

Functionally, this protein is one of the two subunits of integration host factor, a specific DNA-binding protein that functions in genetic recombination as well as in transcriptional and translational control. The sequence is that of Integration host factor subunit alpha from Shewanella loihica (strain ATCC BAA-1088 / PV-4).